The chain runs to 313 residues: Ribosomal RNA small subunit methyltransferase H (313 aa).

S-adenosyl-L-methionine is bound by residues 35-37 (GGH), Asp-55, Phe-79, Asp-101, and Gln-108.

It belongs to the methyltransferase superfamily. RsmH family.

Its subcellular location is the cytoplasm. The enzyme catalyses cytidine(1402) in 16S rRNA + S-adenosyl-L-methionine = N(4)-methylcytidine(1402) in 16S rRNA + S-adenosyl-L-homocysteine + H(+). Its function is as follows. Specifically methylates the N4 position of cytidine in position 1402 (C1402) of 16S rRNA. The chain is Ribosomal RNA small subunit methyltransferase H from Salmonella agona (strain SL483).